We begin with the raw amino-acid sequence, 184 residues long: PXMP2/4 family protein 3 (184 aa).

Residues 1-44 (MSNSKPLSLTDAVTTWYMKKLKSKPIQTKALTSATLSFISSVVA) form the signal peptide. The next 3 helical transmembrane spans lie at 58 to 78 (VVKF…WHII), 97 to 117 (IVDQ…VLAI), and 159 to 179 (LRVL…SILA).

It belongs to the peroxisomal membrane protein PXMP2/4 family.

The protein localises to the membrane. The chain is PXMP2/4 family protein 3 from Dictyostelium discoideum (Social amoeba).